The chain runs to 141 residues: uncharacterized protein (141 aa).

This is an uncharacterized protein from Sinorhizobium fredii (strain NBRC 101917 / NGR234).